A 580-amino-acid polypeptide reads, in one-letter code: FAD-dependent monooxygenase DEP4 (580 aa).

47–50 is a binding site for FAD; sequence VWSK. 58–60 contacts NADP(+); that stretch reads FAQ. Val-112 is an FAD binding site. Residues 186–205, 222–223, and 354–355 contribute to the NADP(+) site; these read VGRS…AGKK, AP, and DI. Residue Met-473 participates in FAD binding.

This sequence belongs to the FAD-binding monooxygenase family. The cofactor is FAD.

It functions in the pathway polyketide biosynthesis. In terms of biological role, part of the gene cluster that mediates the biosynthesis of depudecin, a highly oxidized eleven-carbon linear polyketide that acts as a histone deacetylase (HDAC) inhibitor and makes a small contribution to pathogenesis. The reducing polyketide synthase DEP5 is the central enzyme in depudecin biosynthesis by yielding the backbone polyketide chain. The monooxygenases DEP2 and DEP4, as well as the uncharacterized protein DEP1, then act as tailoring enzymes to modify the intermediate polyketide chain into depudecin. The polypeptide is FAD-dependent monooxygenase DEP4 (Fusarium langsethiae).